A 301-amino-acid polypeptide reads, in one-letter code: Sulfate adenylyltransferase subunit 2 (301 aa).

Belongs to the PAPS reductase family. CysD subfamily. In terms of assembly, heterodimer composed of CysD, the smaller subunit, and CysN.

The enzyme catalyses sulfate + ATP + H(+) = adenosine 5'-phosphosulfate + diphosphate. It participates in sulfur metabolism; hydrogen sulfide biosynthesis; sulfite from sulfate: step 1/3. Functionally, with CysN forms the ATP sulfurylase (ATPS) that catalyzes the adenylation of sulfate producing adenosine 5'-phosphosulfate (APS) and diphosphate, the first enzymatic step in sulfur assimilation pathway. APS synthesis involves the formation of a high-energy phosphoric-sulfuric acid anhydride bond driven by GTP hydrolysis by CysN coupled to ATP hydrolysis by CysD. The polypeptide is Sulfate adenylyltransferase subunit 2 (Geotalea daltonii (strain DSM 22248 / JCM 15807 / FRC-32) (Geobacter daltonii)).